A 654-amino-acid chain; its full sequence is Mitochondrial-processing peptidase subunit alpha-1 (654 aa).

Residues 73–94 form a disordered region; the sequence is SSSSYKGNNNNNNKLSYTTSSN. Positions 381–446 form a coiled coil; sequence HKNHLKSQLQ…EQLELQQVKE (66 aa).

Belongs to the peptidase M16 family. In terms of assembly, heterodimer of alpha and beta subunits, forming the mitochondrial processing protease (MPP) in which subunit alpha is involved in substrate recognition and binding and subunit beta is the catalytic subunit.

Its subcellular location is the mitochondrion matrix. Substrate recognition and binding subunit of the essential mitochondrial processing protease (MPP), which cleaves the mitochondrial sequence off newly imported precursors proteins. The protein is Mitochondrial-processing peptidase subunit alpha-1 (mppA1) of Dictyostelium discoideum (Social amoeba).